A 443-amino-acid chain; its full sequence is Phosphoglucosamine mutase (443 aa).

Residue serine 102 is the Phosphoserine intermediate of the active site. Residues serine 102, aspartate 241, aspartate 243, and aspartate 245 each coordinate Mg(2+). Serine 102 carries the phosphoserine modification.

The protein belongs to the phosphohexose mutase family. It depends on Mg(2+) as a cofactor. In terms of processing, activated by phosphorylation.

The enzyme catalyses alpha-D-glucosamine 1-phosphate = D-glucosamine 6-phosphate. Its function is as follows. Catalyzes the conversion of glucosamine-6-phosphate to glucosamine-1-phosphate. In Albidiferax ferrireducens (strain ATCC BAA-621 / DSM 15236 / T118) (Rhodoferax ferrireducens), this protein is Phosphoglucosamine mutase.